The primary structure comprises 332 residues: Glycerol-3-phosphate dehydrogenase [NAD(P)+] (332 aa).

NADPH contacts are provided by S11, W12, R32, R33, and K106. Positions 106 and 136 each coordinate sn-glycerol 3-phosphate. Position 140 (A140) interacts with NADPH. Sn-glycerol 3-phosphate contacts are provided by K191, D244, S254, R255, and N256. Catalysis depends on K191, which acts as the Proton acceptor. Residue R255 coordinates NADPH. NADPH contacts are provided by V280 and E282.

The protein belongs to the NAD-dependent glycerol-3-phosphate dehydrogenase family.

Its subcellular location is the cytoplasm. It carries out the reaction sn-glycerol 3-phosphate + NAD(+) = dihydroxyacetone phosphate + NADH + H(+). The enzyme catalyses sn-glycerol 3-phosphate + NADP(+) = dihydroxyacetone phosphate + NADPH + H(+). The protein operates within membrane lipid metabolism; glycerophospholipid metabolism. Functionally, catalyzes the reduction of the glycolytic intermediate dihydroxyacetone phosphate (DHAP) to sn-glycerol 3-phosphate (G3P), the key precursor for phospholipid synthesis. This chain is Glycerol-3-phosphate dehydrogenase [NAD(P)+], found in Corynebacterium jeikeium (strain K411).